A 231-amino-acid chain; its full sequence is Lipoprotein-releasing system ATP-binding protein LolD 2 (231 aa).

The 225-residue stretch at 6–230 folds into the ABC transporter domain; the sequence is VEARSLSKSF…DGRLVGQDPA (225 aa). Residue 42-49 coordinates ATP; sequence GPSGSGKS.

It belongs to the ABC transporter superfamily. Lipoprotein translocase (TC 3.A.1.125) family. As to quaternary structure, the complex is composed of two ATP-binding proteins (LolD) and two transmembrane proteins (LolC and LolE).

It localises to the cell inner membrane. Its function is as follows. Part of the ABC transporter complex LolCDE involved in the translocation of mature outer membrane-directed lipoproteins, from the inner membrane to the periplasmic chaperone, LolA. Responsible for the formation of the LolA-lipoprotein complex in an ATP-dependent manner. The sequence is that of Lipoprotein-releasing system ATP-binding protein LolD 2 from Rhodospirillum rubrum (strain ATCC 11170 / ATH 1.1.1 / DSM 467 / LMG 4362 / NCIMB 8255 / S1).